The primary structure comprises 126 residues: Methylglyoxal synthase (126 aa).

In terms of domain architecture, MGS-like spans 1-126 (MEKKIALIAH…LIKGLESLIF (126 aa)). Substrate is bound by residues histidine 10, lysine 14, 36–39 (TGTT), and 56–57 (SG). Aspartate 62 (proton donor/acceptor) is an active-site residue. Position 89 (histidine 89) interacts with substrate.

This sequence belongs to the methylglyoxal synthase family.

It carries out the reaction dihydroxyacetone phosphate = methylglyoxal + phosphate. Functionally, catalyzes the formation of methylglyoxal from dihydroxyacetone phosphate. This Borreliella burgdorferi (strain ATCC 35210 / DSM 4680 / CIP 102532 / B31) (Borrelia burgdorferi) protein is Methylglyoxal synthase.